A 156-amino-acid chain; its full sequence is Protein-export protein SecB (156 aa).

It belongs to the SecB family. In terms of assembly, homotetramer, a dimer of dimers. One homotetramer interacts with 1 SecA dimer.

Its subcellular location is the cytoplasm. Its function is as follows. One of the proteins required for the normal export of preproteins out of the cell cytoplasm. It is a molecular chaperone that binds to a subset of precursor proteins, maintaining them in a translocation-competent state. It also specifically binds to its receptor SecA. The sequence is that of Protein-export protein SecB from Desulfotalea psychrophila (strain LSv54 / DSM 12343).